Consider the following 381-residue polypeptide: UDP-N-acetylglucosamine--N-acetylmuramyl-(pentapeptide) pyrophosphoryl-undecaprenol N-acetylglucosamine transferase (381 aa).

Residues 10–12 (TGG), N124, R165, S207, I263, and Q308 contribute to the UDP-N-acetyl-alpha-D-glucosamine site.

Belongs to the glycosyltransferase 28 family. MurG subfamily.

It is found in the cell inner membrane. It carries out the reaction di-trans,octa-cis-undecaprenyl diphospho-N-acetyl-alpha-D-muramoyl-L-alanyl-D-glutamyl-meso-2,6-diaminopimeloyl-D-alanyl-D-alanine + UDP-N-acetyl-alpha-D-glucosamine = di-trans,octa-cis-undecaprenyl diphospho-[N-acetyl-alpha-D-glucosaminyl-(1-&gt;4)]-N-acetyl-alpha-D-muramoyl-L-alanyl-D-glutamyl-meso-2,6-diaminopimeloyl-D-alanyl-D-alanine + UDP + H(+). It functions in the pathway cell wall biogenesis; peptidoglycan biosynthesis. In terms of biological role, cell wall formation. Catalyzes the transfer of a GlcNAc subunit on undecaprenyl-pyrophosphoryl-MurNAc-pentapeptide (lipid intermediate I) to form undecaprenyl-pyrophosphoryl-MurNAc-(pentapeptide)GlcNAc (lipid intermediate II). This is UDP-N-acetylglucosamine--N-acetylmuramyl-(pentapeptide) pyrophosphoryl-undecaprenol N-acetylglucosamine transferase from Trichlorobacter lovleyi (strain ATCC BAA-1151 / DSM 17278 / SZ) (Geobacter lovleyi).